Here is a 199-residue protein sequence, read N- to C-terminus: Fe/S biogenesis protein NfuA (199 aa).

Residues C156 and C159 each contribute to the [4Fe-4S] cluster site.

This sequence belongs to the NfuA family. As to quaternary structure, homodimer. Requires [4Fe-4S] cluster as cofactor.

In terms of biological role, involved in iron-sulfur cluster biogenesis. Binds a 4Fe-4S cluster, can transfer this cluster to apoproteins, and thereby intervenes in the maturation of Fe/S proteins. Could also act as a scaffold/chaperone for damaged Fe/S proteins. The chain is Fe/S biogenesis protein NfuA from Actinobacillus pleuropneumoniae serotype 5b (strain L20).